Reading from the N-terminus, the 151-residue chain is High mobility group B protein 14 (151 aa).

Disordered stretches follow at residues 1-62 (MTKR…QTKM) and 132-151 (TKRMESGAHDESETDSDYSE). Residues 7-20 (KSGPLSPSCSGGSS) show a composition bias toward low complexity. The segment covering 35-56 (RSTRLRLQPLRKPKTSPKKKPV) has biased composition (basic residues). A DNA-binding region (HMG box) is located at residues 63–132 (PKKPATAFFF…EFHRAMTEYT (70 aa)). A compositionally biased stretch (basic and acidic residues) spans 132–142 (TKRMESGAHDE). Ser150 carries the post-translational modification Phosphoserine.

This sequence belongs to the HMGB family.

It localises to the nucleus. This Arabidopsis thaliana (Mouse-ear cress) protein is High mobility group B protein 14 (HMGB14).